The sequence spans 208 residues: UPF0711 protein C18orf21 homolog (208 aa).

Positions 123-137 (SKHKSTPGSASKHRT) are enriched in basic residues. 2 disordered regions span residues 123–180 (SKHK…KSSP) and 189–208 (MLEN…LSSL). Residues 138-152 (PQTVNWATPKSVANR) are compositionally biased toward polar residues. Residues 153–180 (TPSSTPRSASSNTSSSSSSKSSSVKSSP) show a composition bias toward low complexity.

It belongs to the UPF0711 family.

The polypeptide is UPF0711 protein C18orf21 homolog (Danio rerio (Zebrafish)).